The primary structure comprises 343 residues: Anthranilate phosphoribosyltransferase (343 aa).

5-phospho-alpha-D-ribose 1-diphosphate contacts are provided by residues Gly-84, 87-88 (GD), Thr-92, 94-97 (NIST), 112-120 (KHGNRSVSS), and Ser-124. Gly-84 provides a ligand contact to anthranilate. Residue Ser-96 coordinates Mg(2+). An anthranilate-binding site is contributed by Asn-115. Anthranilate is bound at residue Arg-170. Residues Asp-229 and Glu-230 each coordinate Mg(2+).

This sequence belongs to the anthranilate phosphoribosyltransferase family. Homodimer. The cofactor is Mg(2+).

It carries out the reaction N-(5-phospho-beta-D-ribosyl)anthranilate + diphosphate = 5-phospho-alpha-D-ribose 1-diphosphate + anthranilate. Its pathway is amino-acid biosynthesis; L-tryptophan biosynthesis; L-tryptophan from chorismate: step 2/5. Catalyzes the transfer of the phosphoribosyl group of 5-phosphorylribose-1-pyrophosphate (PRPP) to anthranilate to yield N-(5'-phosphoribosyl)-anthranilate (PRA). This is Anthranilate phosphoribosyltransferase from Stenotrophomonas maltophilia (strain R551-3).